We begin with the raw amino-acid sequence, 448 residues long: Glutamate--tRNA ligase 1 (448 aa).

The short motif at 9–19 (PSPTGKLHIGN) is the 'HIGH' region element. The 'KMSKS' region signature appears at 240–244 (KISKR). K243 lines the ATP pocket.

It belongs to the class-I aminoacyl-tRNA synthetase family. Glutamate--tRNA ligase type 1 subfamily. Monomer.

It is found in the cytoplasm. It carries out the reaction tRNA(Glu) + L-glutamate + ATP = L-glutamyl-tRNA(Glu) + AMP + diphosphate. In terms of biological role, catalyzes the attachment of glutamate to tRNA(Glu) in a two-step reaction: glutamate is first activated by ATP to form Glu-AMP and then transferred to the acceptor end of tRNA(Glu). The protein is Glutamate--tRNA ligase 1 of Orientia tsutsugamushi (strain Ikeda) (Rickettsia tsutsugamushi).